A 908-amino-acid polypeptide reads, in one-letter code: Protein translocase subunit SecA (908 aa).

Residues Q87, 105-109, and D494 each bind ATP; that span reads GEGKT. The interval 871–908 is disordered; sequence QEFSGGNLNRSQSNGSSVTVTTSSGGGTERKTSRRRKR. A compositionally biased stretch (polar residues) spans 874-884; that stretch reads SGGNLNRSQSN.

The protein belongs to the SecA family. As to quaternary structure, monomer and homodimer. Part of the essential Sec protein translocation apparatus which comprises SecA, SecYEG and auxiliary proteins SecDF. Other proteins may also be involved.

It localises to the cell inner membrane. It is found in the cytoplasm. The enzyme catalyses ATP + H2O + cellular proteinSide 1 = ADP + phosphate + cellular proteinSide 2.. Part of the Sec protein translocase complex. Interacts with the SecYEG preprotein conducting channel. Has a central role in coupling the hydrolysis of ATP to the transfer of proteins into and across the cell membrane, serving as an ATP-driven molecular motor driving the stepwise translocation of polypeptide chains across the membrane. This is Protein translocase subunit SecA from Leptospira interrogans serogroup Icterohaemorrhagiae serovar Lai (strain 56601).